Reading from the N-terminus, the 209-residue chain is Glycerol-3-phosphate acyltransferase (209 aa).

A run of 5 helical transmembrane segments spans residues Ile-5–Gly-25, Leu-50–Ala-70, Tyr-74–Gly-94, Ile-115–Leu-135, and Ala-151–Leu-171.

Belongs to the PlsY family. As to quaternary structure, probably interacts with PlsX.

It localises to the cell membrane. It catalyses the reaction an acyl phosphate + sn-glycerol 3-phosphate = a 1-acyl-sn-glycero-3-phosphate + phosphate. Its pathway is lipid metabolism; phospholipid metabolism. In terms of biological role, catalyzes the transfer of an acyl group from acyl-phosphate (acyl-PO(4)) to glycerol-3-phosphate (G3P) to form lysophosphatidic acid (LPA). This enzyme utilizes acyl-phosphate as fatty acyl donor, but not acyl-CoA or acyl-ACP. This is Glycerol-3-phosphate acyltransferase from Limosilactobacillus reuteri (strain DSM 20016) (Lactobacillus reuteri).